Consider the following 444-residue polypeptide: Phosphoglucosamine mutase (444 aa).

Ser101 acts as the Phosphoserine intermediate in catalysis. Residues Ser101, Asp240, Asp242, and Asp244 each contribute to the Mg(2+) site. Residue Ser101 is modified to Phosphoserine.

It belongs to the phosphohexose mutase family. Requires Mg(2+) as cofactor. Post-translationally, activated by phosphorylation.

It carries out the reaction alpha-D-glucosamine 1-phosphate = D-glucosamine 6-phosphate. Catalyzes the conversion of glucosamine-6-phosphate to glucosamine-1-phosphate. In Aeromonas hydrophila subsp. hydrophila (strain ATCC 7966 / DSM 30187 / BCRC 13018 / CCUG 14551 / JCM 1027 / KCTC 2358 / NCIMB 9240 / NCTC 8049), this protein is Phosphoglucosamine mutase.